The chain runs to 296 residues: 4-hydroxy-tetrahydrodipicolinate synthase (296 aa).

Residue Thr49 participates in pyruvate binding. The active-site Proton donor/acceptor is the Tyr137. Residue Lys166 is the Schiff-base intermediate with substrate of the active site. Ile208 contributes to the pyruvate binding site.

It belongs to the DapA family. As to quaternary structure, homotetramer; dimer of dimers.

The protein resides in the cytoplasm. It catalyses the reaction L-aspartate 4-semialdehyde + pyruvate = (2S,4S)-4-hydroxy-2,3,4,5-tetrahydrodipicolinate + H2O + H(+). Its pathway is amino-acid biosynthesis; L-lysine biosynthesis via DAP pathway; (S)-tetrahydrodipicolinate from L-aspartate: step 3/4. Its function is as follows. Catalyzes the condensation of (S)-aspartate-beta-semialdehyde [(S)-ASA] and pyruvate to 4-hydroxy-tetrahydrodipicolinate (HTPA). The chain is 4-hydroxy-tetrahydrodipicolinate synthase from Chlorobium phaeobacteroides (strain DSM 266 / SMG 266 / 2430).